The following is a 527-amino-acid chain: MSTTDRVTTPTPTVSGTDAPGPDASHCHLVVVGGGITGLAAAWQGMARGARVSVVESDDHFGGKVVTDRRDGFLVEQGPDSFVAYRPAALKLIEELGLSDQVIAPGGGRRVSLLSRGKLRPMPAGMGMVLPTRMWPFVTTTVLSWPDKIRAGLDLVIPRRLPDHDVAIGAFLRQRLGDGIVRRFADPMVGGIYGAGIDELSLDAVLPSLRDNERDHRSLMVASLAGGRASRRAARQRAAQNNAQQNSSHQNSTGQNNSAGTRGPAASPFRTLRGGLGQLIDALVDQLRAGGVELLVNTSVDLLGRDGVHLSDGRVLPADAVVLAGGVASSARLLRPQLPAAARALAQIPLASTTIVSLAWPVSAFDVAPDSQGWLEADAGPVSGLTASSIKFAGRAPDGSVLMRVFVPDKRGPLTDAPDDELLSAVIDHVRPLLGVHGEPGLTQITRWHKVMPKYTVGHLERAAVVDSTLAEQRPTWAVAGSALHGVGLPDCISDARHSADEVIDAALAATPSAPNRNAATDRTETR.

The span at 1–14 (MSTTDRVTTPTPTV) shows a compositional bias: low complexity. Positions 1 to 23 (MSTTDRVTTPTPTVSGTDAPGPD) are disordered. Residues 33-38 (GGGITG), 56-57 (ES), K64, and 78-81 (GPDS) each bind FAD. The disordered stretch occupies residues 231 to 267 (RRAARQRAAQNNAQQNSSHQNSTGQNNSAGTRGPAAS). A compositionally biased stretch (low complexity) spans 236–252 (QRAAQNNAQQNSSHQNS). FAD contacts are provided by residues V300, W448, and 487–489 (VGL).

It belongs to the protoporphyrinogen/coproporphyrinogen oxidase family. Coproporphyrinogen III oxidase subfamily. Requires FAD as cofactor.

It localises to the cytoplasm. The catalysed reaction is coproporphyrinogen III + 3 O2 = coproporphyrin III + 3 H2O2. It functions in the pathway porphyrin-containing compound metabolism; protoheme biosynthesis. Functionally, involved in coproporphyrin-dependent heme b biosynthesis. Catalyzes the oxidation of coproporphyrinogen III to coproporphyrin III. In Propionibacterium freudenreichii subsp. freudenreichii, this protein is Coproporphyrinogen III oxidase.